We begin with the raw amino-acid sequence, 48 residues long: ATP synthase protein 8 (48 aa).

The chain crosses the membrane as a helical span at residues 13–32 (LVYGFALVTILLVLFAQYFL).

The protein belongs to the ATPase protein 8 family. F-type ATPases have 2 components, CF(1) - the catalytic core - and CF(0) - the membrane proton channel.

The protein resides in the mitochondrion membrane. Mitochondrial membrane ATP synthase (F(1)F(0) ATP synthase or Complex V) produces ATP from ADP in the presence of a proton gradient across the membrane which is generated by electron transport complexes of the respiratory chain. F-type ATPases consist of two structural domains, F(1) - containing the extramembraneous catalytic core and F(0) - containing the membrane proton channel, linked together by a central stalk and a peripheral stalk. During catalysis, ATP synthesis in the catalytic domain of F(1) is coupled via a rotary mechanism of the central stalk subunits to proton translocation. Part of the complex F(0) domain. Minor subunit located with subunit a in the membrane. The chain is ATP synthase protein 8 (ATP8) from Kluyveromyces lactis (strain ATCC 8585 / CBS 2359 / DSM 70799 / NBRC 1267 / NRRL Y-1140 / WM37) (Yeast).